The primary structure comprises 35 residues: U14-ctenitoxin-Pn1a (35 aa).

Disulfide bonds link Cys3/Cys17, Cys10/Cys22, and Cys16/Cys32.

In terms of tissue distribution, expressed by the venom gland.

The protein localises to the secreted. In terms of biological role, neurotoxin. This is U14-ctenitoxin-Pn1a from Phoneutria nigriventer (Brazilian armed spider).